A 314-amino-acid polypeptide reads, in one-letter code: MRLLAGAGLCLALAALALLAVALSTDHWYETDARRHRDRCRKPGGKRNDPGYMYTPGQHLPLRGEPPSSRIRSPRGGEPGGVRMISRAEDLGVRGLRERPTGARDLPLSRPYLATDPHCSRRFNSTVSGLWRKCHRDGFDKDTEELILKGIVERCTSVRYYYTSSSLPPNLSVNVTKTIRQDEWHALHLRRMTAGFIGMAVSIILFGWMVGVLGCCKQHDLMQYVAGLLFLMGGTCCIISLCTCVAGINFELSRYPRSIYSLPEEISHGYGWSMFCAWGGLGLTLLSGFLCTLAPSLSASQSAVHKPRQENGAV.

The first 24 residues, 1 to 24, serve as a signal peptide directing secretion; sequence MRLLAGAGLCLALAALALLAVALS. The disordered stretch occupies residues 32–83; that stretch reads DARRHRDRCRKPGGKRNDPGYMYTPGQHLPLRGEPPSSRIRSPRGGEPGGVR. A compositionally biased stretch (basic residues) spans 36–45; the sequence is HRDRCRKPGG. Helical transmembrane passes span 194 to 214, 228 to 248, and 274 to 294; these read AGFI…GVLG, LLFL…VAGI, and MFCA…CTLA.

The protein belongs to the TMEM178 family.

Its subcellular location is the membrane. The chain is Transmembrane protein 178B (tmem178b) from Xenopus tropicalis (Western clawed frog).